Here is a 410-residue protein sequence, read N- to C-terminus: Peptidase T (410 aa).

A Zn(2+)-binding site is contributed by His79. Asp81 is an active-site residue. A Zn(2+)-binding site is contributed by Asp142. Glu176 (proton acceptor) is an active-site residue. 3 residues coordinate Zn(2+): Glu177, Asp199, and His381.

The protein belongs to the peptidase M20B family. It depends on Zn(2+) as a cofactor.

It is found in the cytoplasm. It catalyses the reaction Release of the N-terminal residue from a tripeptide.. Cleaves the N-terminal amino acid of tripeptides. In Listeria monocytogenes serotype 4a (strain HCC23), this protein is Peptidase T.